The following is a 154-amino-acid chain: NADPH-dependent 7-cyano-7-deazaguanine reductase (154 aa).

The segment covering 1–13 (MSKTDVSGLSQLG) has biased composition (polar residues). The segment at 1–24 (MSKTDVSGLSQLGRQVDAPTSPET) is disordered. C52 (thioimide intermediate) is an active-site residue. D59 serves as the catalytic Proton donor. Substrate contacts are provided by residues 74-76 (VES) and 93-94 (HE).

Belongs to the GTP cyclohydrolase I family. QueF type 1 subfamily.

It localises to the cytoplasm. The enzyme catalyses 7-aminomethyl-7-carbaguanine + 2 NADP(+) = 7-cyano-7-deazaguanine + 2 NADPH + 3 H(+). It participates in tRNA modification; tRNA-queuosine biosynthesis. Catalyzes the NADPH-dependent reduction of 7-cyano-7-deazaguanine (preQ0) to 7-aminomethyl-7-deazaguanine (preQ1). The polypeptide is NADPH-dependent 7-cyano-7-deazaguanine reductase (Allorhizobium ampelinum (strain ATCC BAA-846 / DSM 112012 / S4) (Agrobacterium vitis (strain S4))).